A 91-amino-acid polypeptide reads, in one-letter code: DNA-binding protein HU (91 aa).

It belongs to the bacterial histone-like protein family.

Its function is as follows. Histone-like DNA-binding protein which is capable of wrapping DNA to stabilize it, and thus to prevent its denaturation under extreme environmental conditions. Also seems to act as a fortuitous virulence factor in delayed sequelae by binding to heparan sulfate-proteoglycans in the extracellular matrix of target organs and acting as a nidus for in situ immune complex formation. The sequence is that of DNA-binding protein HU (hup) from Streptococcus pyogenes serotype M1.